Reading from the N-terminus, the 124-residue chain is Glycine cleavage system H protein (124 aa).

One can recognise a Lipoyl-binding domain in the interval 22–104 (VATVGITEFA…YGAGWLFRVE (83 aa)). Lysine 63 carries the N6-lipoyllysine modification.

The protein belongs to the GcvH family. As to quaternary structure, the glycine cleavage system is composed of four proteins: P, T, L and H. It depends on (R)-lipoate as a cofactor.

Functionally, the glycine cleavage system catalyzes the degradation of glycine. The H protein shuttles the methylamine group of glycine from the P protein to the T protein. In Beutenbergia cavernae (strain ATCC BAA-8 / DSM 12333 / CCUG 43141 / JCM 11478 / NBRC 16432 / NCIMB 13614 / HKI 0122), this protein is Glycine cleavage system H protein.